A 265-amino-acid chain; its full sequence is MQRYAVGIEFSGIQYRGWQTQQPGVASVQETIERVLSKIADEPITLHGAGRTDAGVHATNMVAHFDTTAIRPERGWIMGANSQLPKDISIQWIKQMDEEFHARFKATARRYRYVVYNAPHRPALLHKQVTHIYQKLDVQKMIKAASKFEGTHNFETFRAAACQSNQPVRHVKHCRLFQHGRYLVLDIQADGFLHHMVRNIMGCLLEIGQGMYEIDHIDTMFAAEDRKAAGITAPPDGLYFIQCYYPEQFDLPQPPLGPHWLNLPE.

D53 functions as the Nucleophile in the catalytic mechanism. Position 111 (Y111) interacts with substrate.

It belongs to the tRNA pseudouridine synthase TruA family. In terms of assembly, homodimer.

It carries out the reaction uridine(38/39/40) in tRNA = pseudouridine(38/39/40) in tRNA. Its function is as follows. Formation of pseudouridine at positions 38, 39 and 40 in the anticodon stem and loop of transfer RNAs. The chain is tRNA pseudouridine synthase A from Acinetobacter baumannii (strain AB307-0294).